The following is a 253-amino-acid chain: Large ribosomal subunit protein uL4 (253 aa).

This sequence belongs to the universal ribosomal protein uL4 family. As to quaternary structure, part of the 50S ribosomal subunit.

In terms of biological role, one of the primary rRNA binding proteins, this protein initially binds near the 5'-end of the 23S rRNA. It is important during the early stages of 50S assembly. It makes multiple contacts with different domains of the 23S rRNA in the assembled 50S subunit and ribosome. Its function is as follows. Forms part of the polypeptide exit tunnel. In Methanococcoides burtonii (strain DSM 6242 / NBRC 107633 / OCM 468 / ACE-M), this protein is Large ribosomal subunit protein uL4.